A 392-amino-acid chain; its full sequence is Formate-dependent phosphoribosylglycinamide formyltransferase (392 aa).

N(1)-(5-phospho-beta-D-ribosyl)glycinamide is bound by residues 22 to 23 and E82; that span reads EL. Residues R114, K155, 160–165, 195–198, and E203 contribute to the ATP site; these read SSGKGQ and EGVV. Residues 119–308 form the ATP-grasp domain; sequence RLAAEELGLP…EFALHVRAFL (190 aa). Residues E267 and E279 each contribute to the Mg(2+) site. N(1)-(5-phospho-beta-D-ribosyl)glycinamide contacts are provided by residues D286, K355, and 362–363; that span reads RR.

It belongs to the PurK/PurT family. In terms of assembly, homodimer.

The catalysed reaction is N(1)-(5-phospho-beta-D-ribosyl)glycinamide + formate + ATP = N(2)-formyl-N(1)-(5-phospho-beta-D-ribosyl)glycinamide + ADP + phosphate + H(+). It functions in the pathway purine metabolism; IMP biosynthesis via de novo pathway; N(2)-formyl-N(1)-(5-phospho-D-ribosyl)glycinamide from N(1)-(5-phospho-D-ribosyl)glycinamide (formate route): step 1/1. Functionally, involved in the de novo purine biosynthesis. Catalyzes the transfer of formate to 5-phospho-ribosyl-glycinamide (GAR), producing 5-phospho-ribosyl-N-formylglycinamide (FGAR). Formate is provided by PurU via hydrolysis of 10-formyl-tetrahydrofolate. The protein is Formate-dependent phosphoribosylglycinamide formyltransferase of Salmonella paratyphi A (strain ATCC 9150 / SARB42).